The sequence spans 177 residues: O-acetyl-ADP-ribose deacetylase (177 aa).

Residues 1–175 (MKTRIHVVQG…LYERLLTQQG (175 aa)) form the Macro domain. Substrate contacts are provided by residues 11–12 (DI), N25, 33–35 (GVD), and 122–126 (STGVY). The active-site Proton acceptor is the D35.

The protein belongs to the MacroD-type family. YmdB subfamily. As to quaternary structure, homodimer. Interacts with RNase III.

The enzyme catalyses 3''-O-acetyl-ADP-D-ribose + H2O = ADP-D-ribose + acetate + H(+). It carries out the reaction 2''-O-acetyl-ADP-D-ribose + H2O = ADP-D-ribose + acetate + H(+). In terms of biological role, deacetylates O-acetyl-ADP ribose to yield ADP-ribose and free acetate. Down-regulates ribonuclease 3 (RNase III) activity. Acts by interacting directly with the region of the ribonuclease that is required for dimerization/activation. The sequence is that of O-acetyl-ADP-ribose deacetylase from Shigella dysenteriae serotype 1 (strain Sd197).